The primary structure comprises 250 residues: MAVVHSAPKYASNDGVRGTLVKALGDYVAASHEKYGEIIITVERDAIEDVLRTLRDDHDYQQLMEIAGVDYPERPERFEVVYMLLSLTKNHRVMVKVSTDEKTPVPTVTTLWPNAGWLEREVFDLYGVLFDGNTDLRRILTDYGFEGHPFRKDFPLTGYTELRYSEEEQRVVYEPVELAQDLRTFDFLSPWEGMTPPLPGDEKADMPPIDDPMVTEGPEDTGAGARANAKAAEGTPADPPAMDDEEEDDA.

Residues 193 to 250 (GMTPPLPGDEKADMPPIDDPMVTEGPEDTGAGARANAKAAEGTPADPPAMDDEEEDDA) are disordered. Positions 222–236 (GAGARANAKAAEGTP) are enriched in low complexity. Residues 241–250 (AMDDEEEDDA) are compositionally biased toward acidic residues.

This sequence belongs to the complex I 30 kDa subunit family. In terms of assembly, NDH-1 is composed of 14 different subunits. Subunits NuoB, C, D, E, F, and G constitute the peripheral sector of the complex.

Its subcellular location is the cell inner membrane. The catalysed reaction is a quinone + NADH + 5 H(+)(in) = a quinol + NAD(+) + 4 H(+)(out). Its function is as follows. NDH-1 shuttles electrons from NADH, via FMN and iron-sulfur (Fe-S) centers, to quinones in the respiratory chain. The immediate electron acceptor for the enzyme in this species is believed to be ubiquinone. Couples the redox reaction to proton translocation (for every two electrons transferred, four hydrogen ions are translocated across the cytoplasmic membrane), and thus conserves the redox energy in a proton gradient. The polypeptide is NADH-quinone oxidoreductase subunit C (Erythrobacter litoralis (strain HTCC2594)).